Reading from the N-terminus, the 67-residue chain is Large ribosomal subunit protein bL31 (67 aa).

4 residues coordinate Zn(2+): cysteine 16, cysteine 18, cysteine 36, and cysteine 39.

This sequence belongs to the bacterial ribosomal protein bL31 family. Type A subfamily. In terms of assembly, part of the 50S ribosomal subunit. It depends on Zn(2+) as a cofactor.

Binds the 23S rRNA. The chain is Large ribosomal subunit protein bL31 from Desulforudis audaxviator (strain MP104C).